An 82-amino-acid chain; its full sequence is Putative membrane protein insertion efficiency factor (82 aa).

The protein belongs to the UPF0161 family.

It localises to the cell inner membrane. In terms of biological role, could be involved in insertion of integral membrane proteins into the membrane. This Aeromonas salmonicida (strain A449) protein is Putative membrane protein insertion efficiency factor.